A 184-amino-acid chain; its full sequence is Tumor necrosis factor alpha-induced protein 8-like protein 2 (184 aa).

Phosphoserine is present on Ser-3.

This sequence belongs to the TNFAIP8 family. TNFAIP8L2 subfamily. In terms of assembly, may interact with CASP8; however, such result is unclear since could not reproduce the interaction with CASP8. Interacts with RAC1. In terms of processing, phosphorylated by TAK1/MAP3K7; this phosphorylation triggers association with BTRC and subsequent ubiquitination and degradation. Ubiquitinated in a BTRC-depdent manner; leading to degradation mediated through the proteasome pathway.

The protein resides in the cytoplasm. Its subcellular location is the nucleus. The protein localises to the lysosome. Functionally, acts as a negative regulator of innate and adaptive immunity by maintaining immune homeostasis. Plays a regulatory role in the Toll-like signaling pathway by determining the strength of LPS-induced signaling and gene expression. Inhibits TCR-mediated T-cell activation and negatively regulate T-cell function to prevent hyperresponsiveness. Also inhibits autolysosome formation via negatively modulating MTOR activation by interacting with RAC1 and promoting the disassociation of the RAC1-MTOR complex. Plays an essential role in NK-cell biology by acting as a checkpoint and displaying an expression pattern correlating with NK-cell maturation process and by negatively regulating NK-cell maturation and antitumor immunity. Mechanistically, suppresses IL-15-triggered mTOR activity in NK-cells. The polypeptide is Tumor necrosis factor alpha-induced protein 8-like protein 2 (TNFAIP8L2) (Callithrix jacchus (White-tufted-ear marmoset)).